The sequence spans 62 residues: Photosystem II reaction center protein Z (62 aa).

The next 2 helical transmembrane spans lie at 8–28 and 41–61; these read ALIA…VAYA and YLGS…NFFV.

This sequence belongs to the PsbZ family. PSII is composed of 1 copy each of membrane proteins PsbA, PsbB, PsbC, PsbD, PsbE, PsbF, PsbH, PsbI, PsbJ, PsbK, PsbL, PsbM, PsbT, PsbX, PsbY, PsbZ, Psb30/Ycf12, peripheral proteins PsbO, CyanoQ (PsbQ), PsbU, PsbV and a large number of cofactors. It forms dimeric complexes.

The protein localises to the cellular thylakoid membrane. May control the interaction of photosystem II (PSII) cores with the light-harvesting antenna, regulates electron flow through the 2 photosystem reaction centers. PSII is a light-driven water plastoquinone oxidoreductase, using light energy to abstract electrons from H(2)O, generating a proton gradient subsequently used for ATP formation. This chain is Photosystem II reaction center protein Z, found in Rippkaea orientalis (strain PCC 8801 / RF-1) (Cyanothece sp. (strain PCC 8801)).